The primary structure comprises 80 residues: uncharacterized protein (80 aa).

A disordered region spans residues 57–80; that stretch reads GNIDSDVSDQDQIGNPSAPISNQI.

This is an uncharacterized protein from Bacillus subtilis (strain 168).